Reading from the N-terminus, the 262-residue chain is Proline-rich protein 23C (262 aa).

Disordered stretches follow at residues 1–52 (MGSR…AGTP) and 225–262 (VPSS…LFQE). Pro residues predominate over residues 226–242 (PSSPLQPLPPSPSPGPH). Over residues 243–252 (ARPELPERPP) the composition is skewed to basic and acidic residues. Over residues 253–262 (CKVRRRLFQE) the composition is skewed to basic residues.

This sequence belongs to the PRR23 family.

The polypeptide is Proline-rich protein 23C (PRR23C) (Homo sapiens (Human)).